Here is a 151-residue protein sequence, read N- to C-terminus: MQFSVAAVLALATAVAALPPASGTGAGQQVGHSKNDFPLPKELTTKQAADKCGDQAQLTCCNKTVKTGDFTQVEEGLLAGLLSNLLGAGQGSQGLGLLDECTNIPVIPIISIASPQEKCKQPISCCQNTKSSADGDLVGIGLPCIALGSLL.

The N-terminal stretch at 1–17 (MQFSVAAVLALATAVAA) is a signal peptide. 4 disulfides stabilise this stretch: C52-C125, C60-C119, C61-C101, and C126-C144.

The protein belongs to the fungal hydrophobin family. Interacts with cutinase cutL1 in a pH-dependent manner. Self-assembles to form functional amyloid fibrils called rodlets. Self-assembly into fibrillar rodlets occurs spontaneously at hydrophobic:hydrophilic interfaces and the rodlets further associate laterally to form amphipathic monolayers. rolA rodlet formation is regulated by the strength of ionic interactions between rolA molecules. Three types of self-assembled structures of rolA are observed: spherical, rod-like, and mesh-like.

It is found in the secreted. The protein resides in the cell wall. Its function is as follows. Aerial growth, conidiation, and dispersal of filamentous fungi in the environment rely upon a capability of their secreting small amphipathic proteins called hydrophobins (HPBs) with low sequence identity. Class I can self-assemble into an outermost layer of rodlet bundles on aerial cell surfaces, conferring cellular hydrophobicity that supports fungal growth, development and dispersal; whereas Class II form highly ordered films at water-air interfaces through intermolecular interactions but contribute nothing to the rodlet structure. RolA is a class I hydrophobin that undergoes a conformational change after its adsorption to hydrophobic surfaces such as the biodegradable polyester polybutylene succinate-coadipate (PBSA) and recruits the cutinase cutL1, resulting in condensation of cutL1 on the PBSA surface and consequent stimulation of PBSA hydrolysis. Increases also the activity of polyethylene terephthalate hydrolase (PETase) that hydrolyzes polyethylene terephthalate (PET), one of the most well-known polyesters that is widely used as packaging material, when the PET samples are preincubated with the hydrophobin. The wetting effect of rolA probably acts on PET surface to become hydrophilic, which leads PETase easier to contact and attack the surface. The chain is Class I hydrophobin A from Aspergillus oryzae (strain ATCC 42149 / RIB 40) (Yellow koji mold).